We begin with the raw amino-acid sequence, 473 residues long: Major myo-inositol transporter IolT (473 aa).

The next 12 helical transmembrane spans lie at 14-34 (IILV…VLNG), 49-69 (AFTE…GAVF), 83-103 (ILFL…APNV), 111-131 (FVLG…LAEM), 146-166 (LMIV…GTTM), 172-192 (VWRF…FGMI), 256-276 (IVFI…NSIM), 295-315 (IGNI…IWLL), 325-345 (MTGL…SLVL), 350-370 (ALPY…QGAI), 389-409 (LGMG…SFTF), and 411-431 (ILLA…LGIC).

The protein belongs to the major facilitator superfamily. Sugar transporter (TC 2.A.1.1) family.

The protein resides in the cell membrane. Its pathway is polyol metabolism; myo-inositol degradation into acetyl-CoA. Functionally, major myo-inositol uptake transporter. This Bacillus subtilis (strain 168) protein is Major myo-inositol transporter IolT (iolT).